Here is a 334-residue protein sequence, read N- to C-terminus: L-lactate dehydrogenase (334 aa).

Positions 1-22 (MASTKGKLIHEMVPSKERDPPH) are disordered. Over residues 8–22 (LIHEMVPSKERDPPH) the composition is skewed to basic and acidic residues. Residues 31–59 (GQVG…VEDR) and arginine 101 each bind NAD(+). Substrate-binding residues include arginine 108, asparagine 140, and arginine 171. Asparagine 140 contacts NAD(+). Histidine 195 (proton acceptor) is an active-site residue. Threonine 250 contacts substrate.

The protein belongs to the LDH/MDH superfamily. LDH family. Homotetramer.

The protein localises to the cytoplasm. The catalysed reaction is (S)-lactate + NAD(+) = pyruvate + NADH + H(+). The protein operates within fermentation; pyruvate fermentation to lactate; (S)-lactate from pyruvate: step 1/1. The polypeptide is L-lactate dehydrogenase (Petromyzon marinus (Sea lamprey)).